The chain runs to 188 residues: Elongation factor P (188 aa).

N6-(3,6-diaminohexanoyl)-5-hydroxylysine is present on Lys34.

This sequence belongs to the elongation factor P family. In terms of processing, may be beta-lysylated on the epsilon-amino group of Lys-34 by the combined action of EpmA and EpmB, and then hydroxylated on the C5 position of the same residue by EpmC (if this protein is present). Lysylation is critical for the stimulatory effect of EF-P on peptide-bond formation. The lysylation moiety may extend toward the peptidyltransferase center and stabilize the terminal 3-CCA end of the tRNA. Hydroxylation of the C5 position on Lys-34 may allow additional potential stabilizing hydrogen-bond interactions with the P-tRNA.

Its subcellular location is the cytoplasm. It participates in protein biosynthesis; polypeptide chain elongation. In terms of biological role, involved in peptide bond synthesis. Alleviates ribosome stalling that occurs when 3 or more consecutive Pro residues or the sequence PPG is present in a protein, possibly by augmenting the peptidyl transferase activity of the ribosome. Modification of Lys-34 is required for alleviation. This Coxiella burnetii (strain CbuG_Q212) (Coxiella burnetii (strain Q212)) protein is Elongation factor P.